Reading from the N-terminus, the 824-residue chain is Molybdenum cofactor sulfurase (824 aa).

Lys274 is subject to N6-(pyridoxal phosphate)lysine. Residue Cys433 is part of the active site. Positions 655-822 (CSSSKYRSCT…LQVGQQVYPS (168 aa)) constitute an MOSC domain.

This sequence belongs to the class-V pyridoxal-phosphate-dependent aminotransferase family. MOCOS subfamily. Requires pyridoxal 5'-phosphate as cofactor.

It carries out the reaction Mo-molybdopterin + L-cysteine + AH2 = thio-Mo-molybdopterin + L-alanine + A + H2O. It participates in cofactor biosynthesis; molybdopterin biosynthesis. Its function is as follows. Sulfurates the molybdenum cofactor. Sulfation of molybdenum is essential for xanthine dehydrogenase (XDH) and aldehyde oxidase (ADO) enzymes in which molybdenum cofactor is liganded by 1 oxygen and 1 sulfur atom in active form. In Oryza sativa subsp. japonica (Rice), this protein is Molybdenum cofactor sulfurase (MCSU3).